The sequence spans 438 residues: Aspartate--tRNA(Asp/Asn) ligase (438 aa).

E176 contacts L-aspartate. The tract at residues 198-201 (QLYK) is aspartate. R220 is an L-aspartate binding site. ATP contacts are provided by residues 220–222 (RAE), 228–230 (RHL), and E361. Mg(2+) is bound by residues E361 and S364. The L-aspartate site is built by S364 and R368. 409–412 (GIER) provides a ligand contact to ATP.

Belongs to the class-II aminoacyl-tRNA synthetase family. Type 2 subfamily. Homodimer. Requires Mg(2+) as cofactor.

It localises to the cytoplasm. It carries out the reaction tRNA(Asx) + L-aspartate + ATP = L-aspartyl-tRNA(Asx) + AMP + diphosphate. Aspartyl-tRNA synthetase with relaxed tRNA specificity since it is able to aspartylate not only its cognate tRNA(Asp) but also tRNA(Asn). Reaction proceeds in two steps: L-aspartate is first activated by ATP to form Asp-AMP and then transferred to the acceptor end of tRNA(Asp/Asn). The sequence is that of Aspartate--tRNA(Asp/Asn) ligase from Methanococcus aeolicus (strain ATCC BAA-1280 / DSM 17508 / OCM 812 / Nankai-3).